The primary structure comprises 138 residues: Cysteine desulfuration protein SufE (138 aa).

Cys-51 functions as the Cysteine persulfide intermediate in the catalytic mechanism.

The protein belongs to the SufE family. As to quaternary structure, homodimer. Interacts with SufS.

The protein resides in the cytoplasm. It functions in the pathway cofactor biosynthesis; iron-sulfur cluster biosynthesis. Participates in cysteine desulfuration mediated by SufS. Cysteine desulfuration mobilizes sulfur from L-cysteine to yield L-alanine and constitutes an essential step in sulfur metabolism for biosynthesis of a variety of sulfur-containing biomolecules. Functions as a sulfur acceptor for SufS, by mediating the direct transfer of the sulfur atom from the S-sulfanylcysteine of SufS, an intermediate product of cysteine desulfuration process. This chain is Cysteine desulfuration protein SufE, found in Shigella flexneri serotype 5b (strain 8401).